A 249-amino-acid polypeptide reads, in one-letter code: Probable transcriptional regulatory protein Meso_3192 (249 aa).

This sequence belongs to the TACO1 family.

The protein resides in the cytoplasm. In Chelativorans sp. (strain BNC1), this protein is Probable transcriptional regulatory protein Meso_3192.